The primary structure comprises 385 residues: Cytochrome b (385 aa).

A run of 4 helical transmembrane segments spans residues 32-52, 76-98, 113-133, and 179-199; these read LGSL…FMAM, WLLR…MHIA, VWIV…LGYC, and FFAL…MHFM. Heme b contacts are provided by histidine 82 and histidine 96. Heme b contacts are provided by histidine 183 and histidine 197. A ubiquinone is bound at residue histidine 202. 4 helical membrane-spanning segments follow: residues 225-245, 289-309, 321-341, and 348-368; these read FIFK…LFVF, LLGV…PITD, LSKF…QIGQ, and FVLM…IIVP.

It belongs to the cytochrome b family. Fungal cytochrome b-c1 complex contains 10 subunits; 3 respiratory subunits, 2 core proteins and 5 low-molecular weight proteins. Cytochrome b-c1 complex is a homodimer. It depends on heme b as a cofactor.

The protein localises to the mitochondrion inner membrane. Functionally, component of the ubiquinol-cytochrome c reductase complex (complex III or cytochrome b-c1 complex) that is part of the mitochondrial respiratory chain. The b-c1 complex mediates electron transfer from ubiquinol to cytochrome c. Contributes to the generation of a proton gradient across the mitochondrial membrane that is then used for ATP synthesis. The protein is Cytochrome b (COB) of Candida glabrata (strain ATCC 2001 / BCRC 20586 / JCM 3761 / NBRC 0622 / NRRL Y-65 / CBS 138) (Yeast).